A 181-amino-acid chain; its full sequence is Regulator of G-protein signaling 5 (181 aa).

The RGS domain occupies serine 64–isoleucine 180.

It is found in the cytoplasm. The protein resides in the membrane. Its function is as follows. Inhibits signal transduction by increasing the GTPase activity of G protein alpha subunits thereby driving them into their inactive GDP-bound form. Binds to G(i)-alpha and G(o)-alpha, but not to G(s)-alpha. This chain is Regulator of G-protein signaling 5 (RGS5), found in Sus scrofa (Pig).